The sequence spans 375 residues: MARDYYEILGVSRDTDKEELKQAYRRLARKYHPDVNKEPGAEDRFKEINRAYEVLSEPETRARYDRFGPEGVSGAGAGFQDVGDMGGFADIFESIFSGFAGGMGSPTQQRRRSGPARGDDLRLDLKLDFREAVFGGEKEIRISHLENCEVCSGSGAKPGTRPRTCSTCSGSGQVRRVTRTPFGSFTQVSTCPTCNGTGMVIEDKCDACDGKGANQVTKKLKITIPAGVDNGTRLRISSEGDAGQRGGPSGDLYVYLFVNEDEEFQRDGINILSEIKISYLQAILGCRLEVDTVDGPVELIIPAGTQPNTVMKLENRGVPRLGNPVSRGDHMLNVLIDIPNKVTPEERELLEKLAKIKGDRTGKGGLEGFLGNLFK.

In terms of domain architecture, J spans 4-68; it reads DYYEILGVSR…ETRARYDRFG (65 aa). The CR-type zinc-finger motif lies at 135–217; it reads GGEKEIRISH…CDGKGANQVT (83 aa). The Zn(2+) site is built by Cys-148, Cys-151, Cys-165, Cys-168, Cys-191, Cys-194, Cys-205, and Cys-208. 4 CXXCXGXG motif repeats span residues 148–155, 165–172, 191–198, and 205–212; these read CEVCSGSG, CSTCSGSG, CPTCNGTG, and CDACDGKG.

This sequence belongs to the DnaJ family. In terms of assembly, homodimer. Zn(2+) serves as cofactor.

Its subcellular location is the cytoplasm. Its function is as follows. Participates actively in the response to hyperosmotic and heat shock by preventing the aggregation of stress-denatured proteins and by disaggregating proteins, also in an autonomous, DnaK-independent fashion. Unfolded proteins bind initially to DnaJ; upon interaction with the DnaJ-bound protein, DnaK hydrolyzes its bound ATP, resulting in the formation of a stable complex. GrpE releases ADP from DnaK; ATP binding to DnaK triggers the release of the substrate protein, thus completing the reaction cycle. Several rounds of ATP-dependent interactions between DnaJ, DnaK and GrpE are required for fully efficient folding. Also involved, together with DnaK and GrpE, in the DNA replication of plasmids through activation of initiation proteins. This chain is Chaperone protein DnaJ, found in Nostoc punctiforme (strain ATCC 29133 / PCC 73102).